Here is a 245-residue protein sequence, read N- to C-terminus: Nodulation protein G (245 aa).

11–35 (VTGASGGIGEAIARVLHAQGAIVGL) lines the NAD(+) pocket. S139 contacts substrate. Y152 serves as the catalytic Proton acceptor.

This sequence belongs to the short-chain dehydrogenases/reductases (SDR) family.

Proposed to modify Nod factor fatty acyl chain. This Rhizobium sp. (strain N33) protein is Nodulation protein G (nodG).